The primary structure comprises 523 residues: GMP synthase [glutamine-hydrolyzing] (523 aa).

Residues 8-205 form the Glutamine amidotransferase type-1 domain; sequence KILILDFGSQ…VVDICGCETN (198 aa). The active-site Nucleophile is Cys85. Catalysis depends on residues His179 and Glu181. Residues 206–398 enclose the GMPS ATP-PPase domain; that stretch reads WTAENIIEDA…LGLPAEMLNR (193 aa). 233–239 is a binding site for ATP; that stretch reads SGGVDSS.

In terms of assembly, homodimer.

The enzyme catalyses XMP + L-glutamine + ATP + H2O = GMP + L-glutamate + AMP + diphosphate + 2 H(+). Its pathway is purine metabolism; GMP biosynthesis; GMP from XMP (L-Gln route): step 1/1. Catalyzes the synthesis of GMP from XMP. The sequence is that of GMP synthase [glutamine-hydrolyzing] from Histophilus somni (strain 129Pt) (Haemophilus somnus).